The primary structure comprises 204 residues: UPF0228 protein MA_0511 (204 aa).

It belongs to the UPF0228 family.

The protein is UPF0228 protein MA_0511 of Methanosarcina acetivorans (strain ATCC 35395 / DSM 2834 / JCM 12185 / C2A).